Consider the following 236-residue polypeptide: Uridylate kinase (236 aa).

12–15 (KISG) contacts ATP. Residues 20–25 (GTNGYG) are involved in allosteric activation by GTP. Glycine 54 provides a ligand contact to UMP. Glycine 55 and arginine 59 together coordinate ATP. UMP is bound by residues aspartate 72 and 133 to 140 (TGNPYFST). Tyrosine 166 and aspartate 169 together coordinate ATP.

Belongs to the UMP kinase family. In terms of assembly, homohexamer.

The protein resides in the cytoplasm. The enzyme catalyses UMP + ATP = UDP + ADP. It functions in the pathway pyrimidine metabolism; CTP biosynthesis via de novo pathway; UDP from UMP (UMPK route): step 1/1. With respect to regulation, allosterically activated by GTP. Inhibited by UTP. In terms of biological role, catalyzes the reversible phosphorylation of UMP to UDP. The chain is Uridylate kinase from Clostridium acetobutylicum (strain ATCC 824 / DSM 792 / JCM 1419 / IAM 19013 / LMG 5710 / NBRC 13948 / NRRL B-527 / VKM B-1787 / 2291 / W).